Consider the following 553-residue polypeptide: CTP synthase (553 aa).

Positions 1 to 278 (MVRRTHGNSQ…DAYVVRELGL (278 aa)) are amidoligase domain. Serine 25 provides a ligand contact to CTP. Serine 25 provides a ligand contact to UTP. ATP-binding positions include 26-31 (SLGKGL) and aspartate 83. Aspartate 83 and glutamate 152 together coordinate Mg(2+). CTP is bound by residues 159–161 (DIE), 199–204 (KTKPTQ), and lysine 235. UTP is bound by residues 199–204 (KTKPTQ) and lysine 235. The 250-residue stretch at 303 to 552 (NIAIVGKYID…VKAALDHQAA (250 aa)) folds into the Glutamine amidotransferase type-1 domain. Glycine 366 is an L-glutamine binding site. Cysteine 393 functions as the Nucleophile; for glutamine hydrolysis in the catalytic mechanism. Residues 394 to 397 (LGLQ), glutamate 417, and arginine 478 each bind L-glutamine. Residues histidine 525 and glutamate 527 contribute to the active site.

Belongs to the CTP synthase family. Homotetramer.

The enzyme catalyses UTP + L-glutamine + ATP + H2O = CTP + L-glutamate + ADP + phosphate + 2 H(+). The catalysed reaction is L-glutamine + H2O = L-glutamate + NH4(+). It catalyses the reaction UTP + NH4(+) + ATP = CTP + ADP + phosphate + 2 H(+). Its pathway is pyrimidine metabolism; CTP biosynthesis via de novo pathway; CTP from UDP: step 2/2. Its activity is regulated as follows. Allosterically activated by GTP, when glutamine is the substrate; GTP has no effect on the reaction when ammonia is the substrate. The allosteric effector GTP functions by stabilizing the protein conformation that binds the tetrahedral intermediate(s) formed during glutamine hydrolysis. Inhibited by the product CTP, via allosteric rather than competitive inhibition. In terms of biological role, catalyzes the ATP-dependent amination of UTP to CTP with either L-glutamine or ammonia as the source of nitrogen. Regulates intracellular CTP levels through interactions with the four ribonucleotide triphosphates. This Bifidobacterium longum (strain NCC 2705) protein is CTP synthase.